A 122-amino-acid chain; its full sequence is uncharacterized protein (122 aa).

The chain crosses the membrane as a helical span at residues 9-25 (AFPSPVFLGGVFFVFFF).

It is found in the cytoplasm. The protein localises to the nucleus. It localises to the membrane. This is an uncharacterized protein from Saccharomyces cerevisiae (strain ATCC 204508 / S288c) (Baker's yeast).